A 204-amino-acid chain; its full sequence is HTH-type transcriptional repressor KstR2 (204 aa).

An HTH tetR-type domain is found at 13–73 (SGRRTELLDI…EILRGFLDDL (61 aa)). The H-T-H motif DNA-binding region spans 36 to 55 (TVRDIADAAGILSGSLYHHF).

Homodimer.

In terms of biological role, controls the expression of a small regulon that may play a role in the utilization of cholesterol. In Rhodococcus jostii (strain RHA1), this protein is HTH-type transcriptional repressor KstR2 (kstR2).